We begin with the raw amino-acid sequence, 406 residues long: Elongation factor Tu (406 aa).

The tr-type G domain occupies 10-215 (KPHVNVGTIG…AIDEYIPTPV (206 aa)). The interval 19-26 (GHVDHGKT) is G1. 19 to 26 (GHVDHGKT) is a binding site for GTP. Thr26 contributes to the Mg(2+) binding site. Residues 61–65 (GITIN) are G2. A G3 region spans residues 82–85 (DCPG). GTP contacts are provided by residues 82 to 86 (DCPGH) and 137 to 140 (NKVD). Positions 137-140 (NKVD) are G4. Residues 175-177 (SAL) are G5.

It belongs to the TRAFAC class translation factor GTPase superfamily. Classic translation factor GTPase family. EF-Tu/EF-1A subfamily. As to quaternary structure, monomer.

The protein resides in the cytoplasm. The catalysed reaction is GTP + H2O = GDP + phosphate + H(+). Its function is as follows. GTP hydrolase that promotes the GTP-dependent binding of aminoacyl-tRNA to the A-site of ribosomes during protein biosynthesis. The polypeptide is Elongation factor Tu (Thermus aquaticus).